Here is an 805-residue protein sequence, read N- to C-terminus: Leucine--tRNA ligase (805 aa).

Residues 41 to 52 (PYPSGAGLHVGH) carry the 'HIGH' region motif. A 'KMSKS' region motif is present at residues 577–581 (KMSKS). Residue Lys-580 coordinates ATP.

Belongs to the class-I aminoacyl-tRNA synthetase family.

The protein resides in the cytoplasm. It carries out the reaction tRNA(Leu) + L-leucine + ATP = L-leucyl-tRNA(Leu) + AMP + diphosphate. The polypeptide is Leucine--tRNA ligase (Staphylococcus aureus (strain USA300)).